Here is a 430-residue protein sequence, read N- to C-terminus: Asparagine--tRNA ligase (430 aa).

Belongs to the class-II aminoacyl-tRNA synthetase family. In terms of assembly, homodimer.

It is found in the cytoplasm. It carries out the reaction tRNA(Asn) + L-asparagine + ATP = L-asparaginyl-tRNA(Asn) + AMP + diphosphate + H(+). The chain is Asparagine--tRNA ligase from Staphylococcus aureus (strain USA300).